The primary structure comprises 815 residues: Probable E3 ubiquitin-protein ligase hulA (815 aa).

A C2 domain is found at 1-112 (MGSNLPSQPN…EMGGDEMLTR (112 aa)). Disordered regions lie at residues 134–237 (NLST…GWER) and 253–353 (RTTT…YFVD). Low complexity-rich tracts occupy residues 165–185 (ASAA…SNPS) and 202–212 (APGAAAGATPT). Polar residues-rich tracts occupy residues 213 to 226 (NTQG…SFED) and 253 to 270 (RTTT…QTQR). The WW 1 domain occupies 229 to 262 (GRLPAGWERREDNLGRTYYVDHNTRTTTWTRPSS). Residues 279-294 (LERRAHQSRMLPEDRT) are compositionally biased toward basic and acidic residues. Polar residues predominate over residues 295–308 (GANSPNLPETSQQA). The span at 324-333 (ATGATTAGTG) shows a compositional bias: low complexity. 2 WW domains span residues 333–366 (GELP…DPRR) and 393–426 (GPLP…DPRL). An HECT domain is found at 482 to 815 (SASDLKKRLM…VEETLGFGQE (334 aa)). Cysteine 783 functions as the Glycyl thioester intermediate in the catalytic mechanism.

The protein belongs to the RSP5/NEDD4 family. Interacts with creD.

The protein resides in the cytoplasm. It catalyses the reaction S-ubiquitinyl-[E2 ubiquitin-conjugating enzyme]-L-cysteine + [acceptor protein]-L-lysine = [E2 ubiquitin-conjugating enzyme]-L-cysteine + N(6)-ubiquitinyl-[acceptor protein]-L-lysine.. It functions in the pathway protein modification; protein ubiquitination. In terms of biological role, E3 ubiquitin-protein ligase which accepts ubiquitin from an E2 ubiquitin-conjugating enzyme in the form of a thioester and then directly transfers the ubiquitin to targeted substrates. Probably involved in the regulatory network controlling carbon source utilization. The chain is Probable E3 ubiquitin-protein ligase hulA (hulA) from Aspergillus clavatus (strain ATCC 1007 / CBS 513.65 / DSM 816 / NCTC 3887 / NRRL 1 / QM 1276 / 107).